We begin with the raw amino-acid sequence, 232 residues long: Lipoarabinomannan carrier protein LprG (232 aa).

Residues 1-21 (MQTRLTAILAAFLTAVALLAG) form the signal peptide. Cysteine 22 is lipidated: N-palmitoyl cysteine. The S-diacylglycerol cysteine moiety is linked to residue cysteine 22.

This sequence belongs to the LppX/LprAFG lipoprotein family. Post-translationally, modified by Lgt on Cys-22 with an S-linked diacylglyceral, signal peptide is removed by LspA, Cys-22 is further modifed with a fatty acid on its amino group by Lnt yielding a triacylated protein.

It localises to the cell inner membrane. Functionally, helps membrane protein MHAS_02168/C731_2106 (P55) transport triacylglycerides (TAG) across the inner cell membrane into the periplasm and probably ultimately to the outer membrane. Binds TAG in its hydrophobic cavity and transfers it between lipid bilayers. TAG probably regulates lipid metabolism and growth regulation and plays a structural role in the outer membrane. Also binds mannosides, lipoarabinomannan and lipomannan and various glycolipids in the same cavity. The lprG-MHAS_02167/C731_2107 operon complements the vancomycin sensitivity of an M.smegmatis knockout of the same operon. This chain is Lipoarabinomannan carrier protein LprG, found in Mycolicibacterium hassiacum (strain DSM 44199 / CIP 105218 / JCM 12690 / 3849) (Mycobacterium hassiacum).